A 74-amino-acid polypeptide reads, in one-letter code: Protein krueppel (74 aa).

C2H2-type zinc fingers lie at residues 1 to 4, 10 to 32, 38 to 60, and 66 to 74; these read ERTH, FKCP…MRLH, YHCS…LRVH, and YTCEICKAK.

This sequence belongs to the krueppel C2H2-type zinc-finger protein family.

It is found in the nucleus. Krueppel is a gap class segmentation protein. In Bradysia coprophila (Dark-winged fungus gnat), this protein is Protein krueppel (Kr).